Consider the following 104-residue polypeptide: EPLCRRQFQQHQHLRACQRYLRRRAQRGGLADEQRGPALRLCCNQLRQVNKPCVCPVLRQAAHQQLYQGQIEGPRQVRRLFRAARNLPNICKIPAVGRCQFTRW.

Intrachain disulfides connect C4–C53, C17–C42, C43–C91, and C55–C99.

The protein belongs to the 2S seed storage albumins family. In terms of assembly, heterodimer of a small A and a large B chain linked by disulfide bonds.

Functionally, heat stable 2S seed storage protein having sweetness-inducing activity. The protein is Sweet protein mabinlin-3 of Capparis masaikai (Mabinlang).